The chain runs to 919 residues: Beta-galactosidase 15 (919 aa).

Positions 1–31 (MAASRGPPLLGFRALALALLLAILLLLGCSA) are cleaved as a signal peptide. N-linked (GlcNAc...) asparagine glycosylation is present at Asn63. Glu220 (proton donor) is an active-site residue. Catalysis depends on Glu289, which acts as the Nucleophile. Residues Asn412, Asn530, Asn546, and Asn855 are each glycosylated (N-linked (GlcNAc...) asparagine). One can recognise an SUEL-type lectin domain in the interval 822–907 (NAATPELRLQ…KDLAVEAKCS (86 aa)).

Belongs to the glycosyl hydrolase 35 family.

The protein localises to the secreted. Its subcellular location is the extracellular space. It is found in the apoplast. The enzyme catalyses Hydrolysis of terminal non-reducing beta-D-galactose residues in beta-D-galactosides.. The protein is Beta-galactosidase 15 of Oryza sativa subsp. japonica (Rice).